The primary structure comprises 205 residues: Cytochrome c oxidase subunit 3 (205 aa).

5 helical membrane-spanning segments follow: residues 29 to 49 (TIVF…MYFV), 73 to 93 (LAIT…VFAA), 104 to 124 (WFLI…YEYF), 144 to 164 (ITTG…VVVL), and 184 to 204 (SYYW…IYFI).

This sequence belongs to the cytochrome c oxidase subunit 3 family. As to quaternary structure, associates with subunits I, II and IV to form cytochrome c oxidase.

It is found in the cell membrane. It carries out the reaction 4 Fe(II)-[cytochrome c] + O2 + 8 H(+)(in) = 4 Fe(III)-[cytochrome c] + 2 H2O + 4 H(+)(out). This Corynebacterium efficiens (strain DSM 44549 / YS-314 / AJ 12310 / JCM 11189 / NBRC 100395) protein is Cytochrome c oxidase subunit 3 (ctaE).